Here is an 846-residue protein sequence, read N- to C-terminus: Patched domain-containing protein 4 (846 aa).

10 helical membrane-spanning segments follow: residues 41 to 61 (HPVFFLTVPAVLTITFGLSAL), 230 to 250 (SILARSKVLVSLVLILTTATL), 265 to 285 (GLLGVLTVCISIITAAGIFFI), 293 to 313 (TLLGIPFFAMGHGTKGVFELL), 336 to 356 (VMVTYTMTSSLYFITFGMGAS), 373 to 393 (VSILLNYFYIFSFFGSCLVFA), 465 to 485 (PFVVILYLIYASFSFMGCLQI), 660 to 680 (PVLIAGFGVLLVLILTFFLVI), 686 to 706 (FWLILSVTSIELGVLGLMTLW), and 718 to 738 (LIYTLNFAIDHCAPLLFTFVL). In terms of domain architecture, SSD spans 233–392 (ARSKVLVSLV…FSFFGSCLVF (160 aa)). An N-linked (GlcNAc...) asparagine glycan is attached at Asn-762. Helical transmembrane passes span 765–785 (SFLIGLVPLLFVPSNLTFTLF) and 787–807 (CLLLTGGCTLLHCFVILPVFL).

This sequence belongs to the patched family.

The protein resides in the membrane. In terms of biological role, could act as a repressor of canonical hedgehog signaling by antagonizing the effects of SMO, as suggested by down-regulation of hedgehog target genes, including GLI1, PTCH1, and PTCH2 in PTCHD4-expressing cells. This is Patched domain-containing protein 4 (PTCHD4) from Homo sapiens (Human).